Here is a 145-residue protein sequence, read N- to C-terminus: Ribosomal RNA large subunit methyltransferase H (145 aa).

S-adenosyl-L-methionine-binding positions include Gly-94 and 113 to 118 (LSPLTF).

The protein belongs to the RNA methyltransferase RlmH family. As to quaternary structure, homodimer.

It localises to the cytoplasm. The enzyme catalyses pseudouridine(1915) in 23S rRNA + S-adenosyl-L-methionine = N(3)-methylpseudouridine(1915) in 23S rRNA + S-adenosyl-L-homocysteine + H(+). Its function is as follows. Specifically methylates the pseudouridine at position 1915 (m3Psi1915) in 23S rRNA. This chain is Ribosomal RNA large subunit methyltransferase H, found in Sorangium cellulosum (strain So ce56) (Polyangium cellulosum (strain So ce56)).